A 185-amino-acid polypeptide reads, in one-letter code: Dense granule protein 2 (185 aa).

The N-terminal stretch at 1–23 (MFAVKHCLLVVAVGALVNVSVRA) is a signal peptide. N-linked (GlcNAc...) asparagine glycosylation is present at asparagine 18. 2 disordered regions span residues 41-75 (GKPL…SQRA) and 142-185 (ANVE…DFSQ). Positions 43–66 (PLDERAVGGKGEHTPPLPDERQQE) are enriched in basic and acidic residues.

May also be O-glycosylated. In terms of processing, the N-terminus is blocked.

The protein resides in the parasitophorous vacuole. Functionally, major granular component involved in excreted-secreted antigen (ESA) immunity. Possibly acts in conjunction with GRA1. This chain is Dense granule protein 2 (GRA2), found in Toxoplasma gondii.